The following is a 246-amino-acid chain: DNA repair protein RecO (246 aa).

Belongs to the RecO family.

Its function is as follows. Involved in DNA repair and RecF pathway recombination. This Cutibacterium acnes (strain DSM 16379 / KPA171202) (Propionibacterium acnes) protein is DNA repair protein RecO.